A 297-amino-acid polypeptide reads, in one-letter code: tRNA dimethylallyltransferase (297 aa).

8–15 (GATASGKS) is a binding site for ATP. A substrate-binding site is contributed by 10–15 (TASGKS). The interval 33–36 (DSLS) is interaction with substrate tRNA.

The protein belongs to the IPP transferase family. In terms of assembly, monomer. Mg(2+) serves as cofactor.

The enzyme catalyses adenosine(37) in tRNA + dimethylallyl diphosphate = N(6)-dimethylallyladenosine(37) in tRNA + diphosphate. Its function is as follows. Catalyzes the transfer of a dimethylallyl group onto the adenine at position 37 in tRNAs that read codons beginning with uridine, leading to the formation of N6-(dimethylallyl)adenosine (i(6)A). The sequence is that of tRNA dimethylallyltransferase from Sulfurimonas denitrificans (strain ATCC 33889 / DSM 1251) (Thiomicrospira denitrificans (strain ATCC 33889 / DSM 1251)).